The primary structure comprises 201 residues: 3-isopropylmalate dehydratase small subunit (201 aa).

It belongs to the LeuD family. LeuD type 1 subfamily. In terms of assembly, heterodimer of LeuC and LeuD.

The catalysed reaction is (2R,3S)-3-isopropylmalate = (2S)-2-isopropylmalate. It participates in amino-acid biosynthesis; L-leucine biosynthesis; L-leucine from 3-methyl-2-oxobutanoate: step 2/4. Its function is as follows. Catalyzes the isomerization between 2-isopropylmalate and 3-isopropylmalate, via the formation of 2-isopropylmaleate. In Azorhizobium caulinodans (strain ATCC 43989 / DSM 5975 / JCM 20966 / LMG 6465 / NBRC 14845 / NCIMB 13405 / ORS 571), this protein is 3-isopropylmalate dehydratase small subunit.